The sequence spans 336 residues: 4-hydroxythreonine-4-phosphate dehydrogenase (336 aa).

Thr-140 contributes to the substrate binding site. A divalent metal cation is bound by residues His-171, His-216, and His-271. Lys-279, Asn-288, and Arg-297 together coordinate substrate.

It belongs to the PdxA family. Homodimer. Zn(2+) serves as cofactor. Mg(2+) is required as a cofactor. Requires Co(2+) as cofactor.

The protein localises to the cytoplasm. It carries out the reaction 4-(phosphooxy)-L-threonine + NAD(+) = 3-amino-2-oxopropyl phosphate + CO2 + NADH. Its pathway is cofactor biosynthesis; pyridoxine 5'-phosphate biosynthesis; pyridoxine 5'-phosphate from D-erythrose 4-phosphate: step 4/5. In terms of biological role, catalyzes the NAD(P)-dependent oxidation of 4-(phosphooxy)-L-threonine (HTP) into 2-amino-3-oxo-4-(phosphooxy)butyric acid which spontaneously decarboxylates to form 3-amino-2-oxopropyl phosphate (AHAP). The chain is 4-hydroxythreonine-4-phosphate dehydrogenase from Erythrobacter litoralis (strain HTCC2594).